The chain runs to 261 residues: MEREIVSIDAGWWVVSEEHKIWLPAGELPHGDAASLGLAGSSGSRIGEWQGEAVWLIRGSRPDDMGSLRQLLDRDSALFRLAGRGIQLAEFFRSHQWCGYCGHKMHNSRTEWACLCHHCRQRYYPQIAPCIIVAIRRGAEILLAQHTRHRNGIYTVLAGFVEVGETLEQTVAREVMEESSIKVKNLRYVTSQPWPFPQSLMVAFMADYDDGEISIDRKELIDAGWYRYDALPLLPPAGTVARRLIEDTVALCRAQEENGER.

Arg69 contacts substrate. 2 residues coordinate Zn(2+): Cys98 and Cys101. Glu111 serves as a coordination point for substrate. Positions 116 and 119 each coordinate Zn(2+). Tyr124 provides a ligand contact to substrate. The region spanning 125 to 248 (PQIAPCIIVA…TVARRLIEDT (124 aa)) is the Nudix hydrolase domain. Ala158, Glu174, and Glu178 together coordinate a divalent metal cation. A Nudix box motif is present at residues 159–180 (GFVEVGETLEQTVAREVMEESS). Position 192-199 (192-199 (QPWPFPQS)) interacts with substrate. Glu219 is a binding site for a divalent metal cation. A substrate-binding site is contributed by Ala241.

The protein belongs to the Nudix hydrolase family. NudC subfamily. As to quaternary structure, homodimer. Mg(2+) serves as cofactor. The cofactor is Mn(2+). Requires Zn(2+) as cofactor.

It catalyses the reaction a 5'-end NAD(+)-phospho-ribonucleoside in mRNA + H2O = a 5'-end phospho-adenosine-phospho-ribonucleoside in mRNA + beta-nicotinamide D-ribonucleotide + 2 H(+). The catalysed reaction is NAD(+) + H2O = beta-nicotinamide D-ribonucleotide + AMP + 2 H(+). The enzyme catalyses NADH + H2O = reduced beta-nicotinamide D-ribonucleotide + AMP + 2 H(+). MRNA decapping enzyme that specifically removes the nicotinamide adenine dinucleotide (NAD) cap from a subset of mRNAs by hydrolyzing the diphosphate linkage to produce nicotinamide mononucleotide (NMN) and 5' monophosphate mRNA. The NAD-cap is present at the 5'-end of some mRNAs and stabilizes RNA against 5'-processing. Has preference for mRNAs with a 5'-end purine. Catalyzes the hydrolysis of a broad range of dinucleotide pyrophosphates. The polypeptide is NAD-capped RNA hydrolase NudC (Erwinia tasmaniensis (strain DSM 17950 / CFBP 7177 / CIP 109463 / NCPPB 4357 / Et1/99)).